A 158-amino-acid chain; its full sequence is AP-1 complex subunit sigma-1A (158 aa).

Phosphoserine is present on S147.

This sequence belongs to the adaptor complexes small subunit family. Adaptor protein complex 1 (AP-1) is a heterotetramer composed of two large adaptins (gamma-type subunit AP1G1 and beta-type subunit AP1B1), a medium adaptin (mu-type subunit AP1M1 or AP1M2) and a small adaptin (sigma-type subunit AP1S1 or AP1S2 or AP1S3). In terms of tissue distribution, widely expressed.

The protein resides in the golgi apparatus. It localises to the cytoplasmic vesicle membrane. Its subcellular location is the membrane. The protein localises to the clathrin-coated pit. Subunit of clathrin-associated adaptor protein complex 1 that plays a role in protein sorting in the late-Golgi/trans-Golgi network (TGN) and/or endosomes. The AP complexes mediate both the recruitment of clathrin to membranes and the recognition of sorting signals within the cytosolic tails of transmembrane cargo molecules. The protein is AP-1 complex subunit sigma-1A (AP1S1) of Homo sapiens (Human).